Consider the following 126-residue polypeptide: Protein ApaG (126 aa).

Residues 2–126 (SQLTSSVRVD…FRLSIPGLLH (125 aa)) form the ApaG domain.

This is Protein ApaG from Shewanella halifaxensis (strain HAW-EB4).